The sequence spans 470 residues: Cell division protein FtsA (470 aa).

The tract at residues 416–470 (NKKDTHENEVESTDEEIYQSEDNHQEHKQNHEHVQDKDKDKEESKFKKLMKSLFE) is disordered. Acidic residues predominate over residues 425-434 (VESTDEEIYQ). Basic and acidic residues predominate over residues 436–461 (EDNHQEHKQNHEHVQDKDKDKEESKF).

The protein belongs to the FtsA/MreB family. Self-interacts. Interacts with FtsZ.

It is found in the cell membrane. Cell division protein that is involved in the assembly of the Z ring. May serve as a membrane anchor for the Z ring. The polypeptide is Cell division protein FtsA (Staphylococcus aureus (strain NCTC 8325 / PS 47)).